Here is a 187-residue protein sequence, read N- to C-terminus: Early E3 20.6 kDa glycoprotein (187 aa).

N-linked (GlcNAc...) asparagine; by host glycans are attached at residues asparagine 30, asparagine 73, asparagine 117, asparagine 134, and asparagine 135.

This sequence belongs to the adenoviridae E3_20 family.

The protein is Early E3 20.6 kDa glycoprotein of Human adenovirus B serotype 35 (HAdV-35).